Here is a 289-residue protein sequence, read N- to C-terminus: tRNA pseudouridine synthase B (289 aa).

D38 functions as the Nucleophile in the catalytic mechanism.

This sequence belongs to the pseudouridine synthase TruB family. Type 1 subfamily.

It catalyses the reaction uridine(55) in tRNA = pseudouridine(55) in tRNA. Functionally, responsible for synthesis of pseudouridine from uracil-55 in the psi GC loop of transfer RNAs. This chain is tRNA pseudouridine synthase B, found in Acaryochloris marina (strain MBIC 11017).